The following is a 108-amino-acid chain: Glutaredoxin-1 (108 aa).

Positions 3–106 (EEFVQQRLTN…DILSSIGVLR (104 aa)) constitute a Glutaredoxin domain. Cys-23 and Cys-26 are oxidised to a cystine.

Belongs to the glutaredoxin family.

The protein resides in the virion. Its function is as follows. Displays thioltransferase and dehydroascorbate reductase activities. The polypeptide is Glutaredoxin-1 (OPG075) (Variola virus (isolate Human/India/Ind3/1967) (VARV)).